The chain runs to 525 residues: Arabinose import ATP-binding protein AraG 2 (525 aa).

Positions 1–25 are disordered; the sequence is MTDTTIRARGAQAAGSPAGAGPLDA. Positions 7 to 25 are enriched in low complexity; the sequence is RARGAQAAGSPAGAGPLDA. 2 ABC transporter domains span residues 35-270 and 281-524; these read LELD…MVGR and REPG…LALP. 67-74 provides a ligand contact to ATP; sequence GENGAGKS.

Belongs to the ABC transporter superfamily. Arabinose importer (TC 3.A.1.2.2) family. The complex is composed of two ATP-binding proteins (AraG), two transmembrane proteins (AraH) and a solute-binding protein (AraF).

It localises to the cell inner membrane. The catalysed reaction is L-arabinose(out) + ATP + H2O = L-arabinose(in) + ADP + phosphate + H(+). Part of the ABC transporter complex AraFGH involved in arabinose import. Responsible for energy coupling to the transport system. The polypeptide is Arabinose import ATP-binding protein AraG 2 (Burkholderia thailandensis (strain ATCC 700388 / DSM 13276 / CCUG 48851 / CIP 106301 / E264)).